Consider the following 1184-residue polypeptide: DNA-directed RNA polymerase subunit beta (1184 aa).

The protein belongs to the RNA polymerase beta chain family. In terms of assembly, the RNAP catalytic core consists of 2 alpha, 1 beta, 1 beta' and 1 omega subunit. When a sigma factor is associated with the core the holoenzyme is formed, which can initiate transcription.

It catalyses the reaction RNA(n) + a ribonucleoside 5'-triphosphate = RNA(n+1) + diphosphate. In terms of biological role, DNA-dependent RNA polymerase catalyzes the transcription of DNA into RNA using the four ribonucleoside triphosphates as substrates. This Fusobacterium nucleatum subsp. nucleatum (strain ATCC 25586 / DSM 15643 / BCRC 10681 / CIP 101130 / JCM 8532 / KCTC 2640 / LMG 13131 / VPI 4355) protein is DNA-directed RNA polymerase subunit beta.